The following is a 275-amino-acid chain: 2,3,4,5-tetrahydropyridine-2,6-dicarboxylate N-succinyltransferase (275 aa).

Residues Arg104 and Asp141 each contribute to the substrate site.

It belongs to the transferase hexapeptide repeat family. In terms of assembly, homotrimer.

The protein resides in the cytoplasm. It catalyses the reaction (S)-2,3,4,5-tetrahydrodipicolinate + succinyl-CoA + H2O = (S)-2-succinylamino-6-oxoheptanedioate + CoA. It participates in amino-acid biosynthesis; L-lysine biosynthesis via DAP pathway; LL-2,6-diaminopimelate from (S)-tetrahydrodipicolinate (succinylase route): step 1/3. The sequence is that of 2,3,4,5-tetrahydropyridine-2,6-dicarboxylate N-succinyltransferase from Haemophilus influenzae (strain PittEE).